Here is a 180-residue protein sequence, read N- to C-terminus: MKCPRCSKQEIRVLESRSAEGGQSVRRRRECMSCGYRFTTYERIEFMPIMVIKRDGSRESFNRNKILQGVMRACQKTPVTVRQMEELVNEIEEKLQLEDAQEVTSLRIGEMVLERLQHLSEVAYVRFASVYRQFQGIKDFVNELEQLEPPLRRDLERLLQDSSASDSESSGSPDLVGEYS.

Residues 3–34 (CPRCSKQEIRVLESRSAEGGQSVRRRRECMSC) fold into a zinc finger. The ATP-cone domain occupies 49 to 139 (IMVIKRDGSR…VYRQFQGIKD (91 aa)). Residues 155–180 (LERLLQDSSASDSESSGSPDLVGEYS) form a disordered region. Low complexity predominate over residues 160-174 (QDSSASDSESSGSPD).

Belongs to the NrdR family. Zn(2+) serves as cofactor.

Negatively regulates transcription of bacterial ribonucleotide reductase nrd genes and operons by binding to NrdR-boxes. The chain is Transcriptional repressor NrdR from Synechococcus sp. (strain JA-2-3B'a(2-13)) (Cyanobacteria bacterium Yellowstone B-Prime).